The sequence spans 492 residues: Gamma-aminobutyric acid receptor subunit alpha-3 (492 aa).

The signal sequence occupies residues 1–28 (MIITQTSHCYMTSLGILFLINILPGTTG). A disordered region spans residues 28-54 (GQGESRRQEPGDFVKQDIGGLSPKHAP). The Extracellular portion of the chain corresponds to 29–274 (QGESRRQEPG…MTTHFHLKRK (246 aa)). Residues 31 to 42 (ESRRQEPGDFVK) are compositionally biased toward basic and acidic residues. N-linked (GlcNAc...) asparagine glycosylation occurs at N63. R119 is a binding site for 4-aminobutanoate. 2 N-linked (GlcNAc...) asparagine glycosylation sites follow: N163 and N176. A 4-aminobutanoate-binding site is contributed by T182. The cysteines at positions 191 and 205 are disulfide-linked. An N-linked (GlcNAc...) asparagine glycan is attached at N228. A helical membrane pass occupies residues 275 to 295 (IGYFVIQTYLPCIMTVILSQV). Residues 296-305 (SFWLNRESVP) lie on the Cytoplasmic side of the membrane. The chain crosses the membrane as a helical span at residues 306–325 (ARTVFGVTTVLTMTTLSISA). Residues 326 to 336 (RNSLPKVAYAT) are Extracellular-facing. Residues 337–357 (AMDWFIAVCYAFVFSALIEFA) traverse the membrane as a helical segment. At 358–457 (TVNYFTKRSW…TYNSVSKVDK (100 aa)) the chain is on the cytoplasmic side. At S426 the chain carries Phosphoserine. Phosphothreonine is present on T427. Phosphoserine is present on residues S433 and S442. A helical membrane pass occupies residues 458 to 478 (ISRIIFPVLFAIFNLVYWATY). At 479 to 492 (VNRESAIKGMIRKQ) the chain is on the extracellular side.

The protein belongs to the ligand-gated ion channel (TC 1.A.9) family. Gamma-aminobutyric acid receptor (TC 1.A.9.5) subfamily. GABRA3 sub-subfamily. In terms of assembly, heteropentamer, formed by a combination of alpha (GABRA1-6), beta (GABRB1-3), gamma (GABRG1-3), delta (GABRD), epsilon (GABRE), rho (GABRR1-3), pi (GABRP) and theta (GABRQ) chains, each subunit exhibiting distinct physiological and pharmacological properties. Binds UBQLN1. Interacts with GPHN.

The protein localises to the postsynaptic cell membrane. The protein resides in the cell membrane. The enzyme catalyses chloride(in) = chloride(out). With respect to regulation, potentiated by etomidate, propofol, pregnanolone and flurazepam. Functionally, alpha subunit of the heteropentameric ligand-gated chloride channel gated by gamma-aminobutyric acid (GABA), a major inhibitory neurotransmitter in the brain. GABA-gated chloride channels, also named GABA(A) receptors (GABAAR), consist of five subunits arranged around a central pore and contain GABA active binding site(s) located at the alpha and beta subunit interface(s). When activated by GABA, GABAARs selectively allow the flow of chloride anions across the cell membrane down their electrochemical gradient. Chloride influx into the postsynaptic neuron following GABAAR opening decreases the neuron ability to generate a new action potential, thereby reducing nerve transmission. The protein is Gamma-aminobutyric acid receptor subunit alpha-3 of Homo sapiens (Human).